The following is a 252-amino-acid chain: Probable transcriptional regulatory protein Tmel_0985 (252 aa).

Belongs to the TACO1 family.

It is found in the cytoplasm. This chain is Probable transcriptional regulatory protein Tmel_0985, found in Thermosipho melanesiensis (strain DSM 12029 / CIP 104789 / BI429).